The chain runs to 362 residues: tRNA-specific 2-thiouridylase MnmA 3 (362 aa).

Residues 11–18 (GMSGGIDS) and Met37 contribute to the ATP site. The active-site Nucleophile is Cys91. A disulfide bridge connects residues Cys91 and Cys188. Gly115 is an ATP binding site. The segment at 137–139 (KDQ) is interaction with tRNA. The active-site Cysteine persulfide intermediate is the Cys188. The tract at residues 296-297 (RY) is interaction with tRNA.

This sequence belongs to the MnmA/TRMU family.

Its subcellular location is the cytoplasm. The enzyme catalyses S-sulfanyl-L-cysteinyl-[protein] + uridine(34) in tRNA + AH2 + ATP = 2-thiouridine(34) in tRNA + L-cysteinyl-[protein] + A + AMP + diphosphate + H(+). Catalyzes the 2-thiolation of uridine at the wobble position (U34) of tRNA, leading to the formation of s(2)U34. The chain is tRNA-specific 2-thiouridylase MnmA 3 from Bacteroides fragilis (strain ATCC 25285 / DSM 2151 / CCUG 4856 / JCM 11019 / LMG 10263 / NCTC 9343 / Onslow / VPI 2553 / EN-2).